The sequence spans 66 residues: Probable cytochrome b-c1 complex subunit 9 (66 aa).

At 1–20 the chain is on the mitochondrial matrix side; that stretch reads MSNALTNIFYKYVARRNSTW. The helical transmembrane segment at 21–46 threads the bilayer; sequence MAGAILGAFVLDSTVSGAVNTFFDSV. At 47 to 66 the chain is on the mitochondrial intermembrane side; it reads NKGKLWKDVYAERVKKGISQ.

It belongs to the UQCR10/QCR9 family. In terms of assembly, component of the ubiquinol-cytochrome c oxidoreductase (cytochrome b-c1 complex, complex III, CIII), a multisubunit enzyme composed of 3 respiratory subunits cytochrome b, cytochrome c1 and Rieske protein, 2 core protein subunits, and additional low-molecular weight protein subunits. The complex exists as an obligatory dimer and forms supercomplexes (SCs) in the inner mitochondrial membrane with cytochrome c oxidase (complex IV, CIV).

The protein resides in the mitochondrion inner membrane. In terms of biological role, component of the ubiquinol-cytochrome c oxidoreductase, a multisubunit transmembrane complex that is part of the mitochondrial electron transport chain which drives oxidative phosphorylation. The respiratory chain contains 3 multisubunit complexes succinate dehydrogenase (complex II, CII), ubiquinol-cytochrome c oxidoreductase (cytochrome b-c1 complex, complex III, CIII) and cytochrome c oxidase (complex IV, CIV), that cooperate to transfer electrons derived from NADH and succinate to molecular oxygen, creating an electrochemical gradient over the inner membrane that drives transmembrane transport and the ATP synthase. The cytochrome b-c1 complex catalyzes electron transfer from ubiquinol to cytochrome c, linking this redox reaction to translocation of protons across the mitochondrial inner membrane, with protons being carried across the membrane as hydrogens on the quinol. In the process called Q cycle, 2 protons are consumed from the matrix, 4 protons are released into the intermembrane space and 2 electrons are passed to cytochrome c. This is Probable cytochrome b-c1 complex subunit 9 from Dictyostelium discoideum (Social amoeba).